A 118-amino-acid chain; its full sequence is uncharacterized protein (118 aa).

The tract at residues 49–80 (SKEEHTTSAANLHPRKKKRMPPRRAEKNKAPN) is disordered. Over residues 61-70 (HPRKKKRMPP) the composition is skewed to basic residues.

This is an uncharacterized protein from Saccharomyces cerevisiae (strain ATCC 204508 / S288c) (Baker's yeast).